The following is a 168-amino-acid chain: ATP synthase subunit d, mitochondrial (168 aa).

It belongs to the ATPase d subunit family. F-type ATPases have 2 components, CF(1) - the catalytic core - and CF(0) - the membrane proton channel. CF(0) seems to have nine subunits: a, b, c, d, e, f, g, F6 and 8 (or A6L).

It localises to the mitochondrion. Its subcellular location is the mitochondrion inner membrane. Mitochondrial membrane ATP synthase (F(1)F(0) ATP synthase or Complex V) produces ATP from ADP in the presence of a proton gradient across the membrane which is generated by electron transport complexes of the respiratory chain. F-type ATPases consist of two structural domains, F(1) - containing the extramembraneous catalytic core, and F(0) - containing the membrane proton channel, linked together by a central stalk and a peripheral stalk. During catalysis, ATP synthesis in the catalytic domain of F(1) is coupled via a rotary mechanism of the central stalk subunits to proton translocation. Part of the complex F(0) domain and the peripheric stalk, which acts as a stator to hold the catalytic alpha(3)beta(3) subcomplex and subunit a/ATP6 static relative to the rotary elements. The chain is ATP synthase subunit d, mitochondrial from Arabidopsis thaliana (Mouse-ear cress).